Consider the following 263-residue polypeptide: N-acyl homoserine lactonase AttM (263 aa).

Zn(2+) contacts are provided by His-103, His-105, Asp-107, His-108, His-180, Asp-202, and His-247.

The protein belongs to the metallo-beta-lactamase superfamily. It depends on Zn(2+) as a cofactor.

The catalysed reaction is an N-acyl-L-homoserine lactone + H2O = an N-acyl-L-homoserine + H(+). The protein is N-acyl homoserine lactonase AttM of Agrobacterium fabrum (strain C58 / ATCC 33970) (Agrobacterium tumefaciens (strain C58)).